The chain runs to 366 residues: tRNA-specific 2-thiouridylase MnmA (366 aa).

Residues 12–19 (GMSGGVDS) and Met38 contribute to the ATP site. The tract at residues 98–100 (NPD) is interaction with target base in tRNA. The Nucleophile role is filled by Cys103. Cys103 and Cys200 form a disulfide bridge. Gly128 contributes to the ATP binding site. An interaction with tRNA region spans residues 150–152 (KDQ). The active-site Cysteine persulfide intermediate is the Cys200. The segment at 312–313 (RY) is interaction with tRNA.

It belongs to the MnmA/TRMU family.

It is found in the cytoplasm. It carries out the reaction S-sulfanyl-L-cysteinyl-[protein] + uridine(34) in tRNA + AH2 + ATP = 2-thiouridine(34) in tRNA + L-cysteinyl-[protein] + A + AMP + diphosphate + H(+). Catalyzes the 2-thiolation of uridine at the wobble position (U34) of tRNA, leading to the formation of s(2)U34. This Pseudoalteromonas translucida (strain TAC 125) protein is tRNA-specific 2-thiouridylase MnmA.